The sequence spans 103 residues: Potassium voltage-gated channel subfamily E member 3 (103 aa).

N-linked (GlcNAc...) asparagine glycosylation is found at N5, N22, and N41. The segment at 32–53 (RPGPGLGPDNQTEERRASLPGR) is disordered. Over residues 43-53 (TEERRASLPGR) the composition is skewed to basic and acidic residues. A helical membrane pass occupies residues 57-77 (SYMYILFVMFLFAVTVGSLIL). Positions 68–79 (FAVTVGSLILGY) are interaction with KCNQ1. Residues 78–103 (GYTRSRKVDKRSDPYHVYIKNRVSMI) lie on the Cytoplasmic side of the membrane.

Belongs to the potassium channel KCNE family. In terms of assembly, interacts with KCNB1. Interacts with KCNC2. Associates with KCNC4/Kv3.4. Interacts with KCNQ1; associates with a KCNQ1:KCNE3 stoichiometry of 4:4; produces a current with nearly instantaneous activation with a linear current-voltage relationship and alters membrane raft localization; affects KCNQ1 structure and gating properties. In terms of tissue distribution, expressed in hippocampal neurons (at protein level). Widely expressed with highest levels in kidney and moderate levels in small intestine.

Its subcellular location is the cell membrane. It is found in the cytoplasm. It localises to the perikaryon. The protein localises to the cell projection. The protein resides in the dendrite. Its subcellular location is the membrane raft. Ancillary protein that functions as a regulatory subunit of the voltage-gated potassium (Kv) channel complex composed of pore-forming and potassium-conducting alpha subunits and of regulatory beta subunits. KCNE3 beta subunit modulates the gating kinetics and enhances stability of the channel complex. Alters the gating of the delayed rectifier Kv channel containing KCNB1 alpha subunit. Associates with KCNC4/Kv3.4 alpha subunit to form the subthreshold Kv channel in skeletal muscle and to establish the resting membrane potential (RMP) in muscle cells. Association with KCNQ1/KCLQT1 alpha subunit may form the intestinal cAMP-stimulated potassium channel involved in chloride secretion that produces a current with nearly instantaneous activation with a linear current-voltage relationship. This Homo sapiens (Human) protein is Potassium voltage-gated channel subfamily E member 3.